The chain runs to 322 residues: Lipoyl synthase (322 aa).

[4Fe-4S] cluster contacts are provided by Cys61, Cys66, Cys72, Cys87, Cys91, Cys94, and Ser300. The Radical SAM core domain maps to 73 to 289 (WDKKHATFMI…ETVAYTKGFL (217 aa)).

The protein belongs to the radical SAM superfamily. Lipoyl synthase family. [4Fe-4S] cluster is required as a cofactor.

The protein localises to the cytoplasm. It carries out the reaction [[Fe-S] cluster scaffold protein carrying a second [4Fe-4S](2+) cluster] + N(6)-octanoyl-L-lysyl-[protein] + 2 oxidized [2Fe-2S]-[ferredoxin] + 2 S-adenosyl-L-methionine + 4 H(+) = [[Fe-S] cluster scaffold protein] + N(6)-[(R)-dihydrolipoyl]-L-lysyl-[protein] + 4 Fe(3+) + 2 hydrogen sulfide + 2 5'-deoxyadenosine + 2 L-methionine + 2 reduced [2Fe-2S]-[ferredoxin]. It functions in the pathway protein modification; protein lipoylation via endogenous pathway; protein N(6)-(lipoyl)lysine from octanoyl-[acyl-carrier-protein]: step 2/2. Functionally, catalyzes the radical-mediated insertion of two sulfur atoms into the C-6 and C-8 positions of the octanoyl moiety bound to the lipoyl domains of lipoate-dependent enzymes, thereby converting the octanoylated domains into lipoylated derivatives. The protein is Lipoyl synthase of Rhizobium meliloti (strain 1021) (Ensifer meliloti).